Consider the following 318-residue polypeptide: L-lactate dehydrogenase (318 aa).

NAD(+) is bound by residues Val18, Asp39, Lys44, Tyr69, and 83 to 84 (GA). Substrate contacts are provided by Gln86 and Arg92. Residues Ser105, 122 to 124 (VSN), and Ser147 contribute to the NAD(+) site. 124-127 (NPVD) serves as a coordination point for substrate. 152–155 (DTSR) provides a ligand contact to substrate. Catalysis depends on His179, which acts as the Proton acceptor. Position 225 is a phosphotyrosine (Tyr225). Thr234 provides a ligand contact to substrate.

The protein belongs to the LDH/MDH superfamily. LDH family. As to quaternary structure, homotetramer.

It localises to the cytoplasm. It carries out the reaction (S)-lactate + NAD(+) = pyruvate + NADH + H(+). The protein operates within fermentation; pyruvate fermentation to lactate; (S)-lactate from pyruvate: step 1/1. Catalyzes the conversion of lactate to pyruvate. The protein is L-lactate dehydrogenase of Clostridium botulinum (strain 657 / Type Ba4).